A 957-amino-acid chain; its full sequence is Glycine dehydrogenase (decarboxylating) (957 aa).

K708 carries the post-translational modification N6-(pyridoxal phosphate)lysine.

The protein belongs to the GcvP family. In terms of assembly, the glycine cleavage system is composed of four proteins: P, T, L and H. It depends on pyridoxal 5'-phosphate as a cofactor.

The catalysed reaction is N(6)-[(R)-lipoyl]-L-lysyl-[glycine-cleavage complex H protein] + glycine + H(+) = N(6)-[(R)-S(8)-aminomethyldihydrolipoyl]-L-lysyl-[glycine-cleavage complex H protein] + CO2. Its function is as follows. The glycine cleavage system catalyzes the degradation of glycine. The P protein binds the alpha-amino group of glycine through its pyridoxal phosphate cofactor; CO(2) is released and the remaining methylamine moiety is then transferred to the lipoamide cofactor of the H protein. The sequence is that of Glycine dehydrogenase (decarboxylating) from Escherichia coli (strain ATCC 8739 / DSM 1576 / NBRC 3972 / NCIMB 8545 / WDCM 00012 / Crooks).